We begin with the raw amino-acid sequence, 118 residues long: Ribosome-binding factor A (118 aa).

It belongs to the RbfA family. As to quaternary structure, monomer. Binds 30S ribosomal subunits, but not 50S ribosomal subunits or 70S ribosomes.

It is found in the cytoplasm. In terms of biological role, one of several proteins that assist in the late maturation steps of the functional core of the 30S ribosomal subunit. Associates with free 30S ribosomal subunits (but not with 30S subunits that are part of 70S ribosomes or polysomes). Required for efficient processing of 16S rRNA. May interact with the 5'-terminal helix region of 16S rRNA. This chain is Ribosome-binding factor A, found in Thermodesulfovibrio yellowstonii (strain ATCC 51303 / DSM 11347 / YP87).